Reading from the N-terminus, the 128-residue chain is Diacylglycerol kinase (128 aa).

E34 is an a divalent metal cation binding site. The next 2 membrane-spanning stretches (helical) occupy residues 35 to 55 (SAFRQIVILALFCIVLASYLT) and 58 to 78 (FLEWGLLILPCFLSVVIELIN). Residue E75 is the Proton acceptor of the active site. E82 serves as a coordination point for a divalent metal cation. The helical transmembrane segment at 108–128 (LIGLIFWAFIWGRYLLTLYFN) threads the bilayer.

The protein belongs to the bacterial diacylglycerol kinase family. Mg(2+) is required as a cofactor.

It localises to the cell inner membrane. It carries out the reaction a 1,2-diacyl-sn-glycerol + ATP = a 1,2-diacyl-sn-glycero-3-phosphate + ADP + H(+). Functionally, catalyzes the ATP-dependent phosphorylation of sn-l,2-diacylglycerol (DAG) to phosphatidic acid. Involved in the recycling of diacylglycerol produced as a by-product during membrane-derived oligosaccharide (MDO) biosynthesis. The polypeptide is Diacylglycerol kinase (dgkA) (Helicobacter pylori (strain J99 / ATCC 700824) (Campylobacter pylori J99)).